The following is a 671-amino-acid chain: MPTEQTHNVVHEANGVKLRETPKEFFERQPNKGHIHDVNQYKQMYEQSIKDPQGFFGPLAKELLSWDHDFHTVKSGTLKNGDAAWFLGGELNASYNCVDRHAFANPDKPALICEADDEKDSHILTYGDLLREVSKVAGVLQSWGIKKGDTVAVYLPMNAQAIIAMLAIARLGAAHSVIFAGFSAGSIKDRVNDASCKALITCDEGKRGGRTTNIKKLCDEALVDCPTVEKVLVYKRTNNPEIHLTEGRDYYWDVETAKFPGYLPPVSVNSEDPLFLLYTSGSTGTPKGVVHSTAGYLLGAALSTKYIFDIHPEDILFTAGDVGWITGHTYALYGPLLLGVPTIIFEGTPAYPDYGRFWQIVEKHKATHFYVAPTALRLLRKAGEQEIVKYDLSSLRTLGSVGEPISPDIWEWYNEFVGKNQCHISDTYWQTESGSHLIAPLAGVVPNKPGSASYPFFGIDAALIDPVTGVEIEGNDAEGVLAIKDHWPSMARTVYKNHTKYMDTYMNPYPGYYFTGDGAARDHDGYYWIRGRVDDVVNVSGHRLSTAEIEAALIEDKKVSEAAVVGIHDDITGQAVIAYVALKEGNSDEDSEGLRKELVLQVRKTIGPFAAPKSVIIVQDLPKTRSGKIMRRILRKVSSNEADQLGDISTLSNPQSVEGIISAFGAQFGKK.

Residues 207–210 (RGGR) and threonine 326 contribute to the CoA site. Residues 402 to 404 (GEP), 426 to 431 (DTYWQT), aspartate 517, and arginine 532 contribute to the ATP site. Serine 540 lines the CoA pocket. Position 543 (arginine 543) interacts with ATP. Arginine 603 contributes to the CoA binding site.

This sequence belongs to the ATP-dependent AMP-binding enzyme family.

The enzyme catalyses acetate + ATP + CoA = acetyl-CoA + AMP + diphosphate. The protein is Acetyl-coenzyme A synthetase 2 (ACS2) of Candida albicans (strain SC5314 / ATCC MYA-2876) (Yeast).